Reading from the N-terminus, the 175-residue chain is Mitochondrial inner membrane protease subunit 2 (175 aa).

A helical membrane pass occupies residues 19 to 37 (FFVAVPVAVTFLDRVACVA). Residues S43 and K91 contribute to the active site.

It belongs to the peptidase S26 family. IMP2 subfamily. Heterodimer of 2 subunits, IMMPL1 and IMMPL2.

The protein localises to the mitochondrion inner membrane. Catalyzes the removal of transit peptides required for the targeting of proteins from the mitochondrial matrix, across the inner membrane, into the inter-membrane space. Known to process the nuclear encoded protein DIABLO. The chain is Mitochondrial inner membrane protease subunit 2 (Immp2l) from Mus musculus (Mouse).